The following is a 466-amino-acid chain: Muscarinic acetylcholine receptor M2 (466 aa).

The Extracellular segment spans residues 1 to 25 (MNNSTYINSSSENVIALESPYKTIE). Asn2, Asn3, and Asn8 each carry an N-linked (GlcNAc...) asparagine glycan. A helical transmembrane segment spans residues 26–48 (VVFIVLVAGSLSLVTIIGNILVM). Residues 49 to 62 (VSIKVNRHLQTVNN) are Cytoplasmic-facing. A helical transmembrane segment spans residues 63–83 (YFLFSLACADLIIGIFSMNLY). Residues 84-100 (TLYTVIGYWPLGPVVCD) are Extracellular-facing. Cys99 and Cys179 are disulfide-bonded. The helical transmembrane segment at 101–122 (LWLALDYVVSNASVMNLLIISF) threads the bilayer. An Important for signaling motif is present at residues 123–125 (DRY). Topologically, residues 123 to 142 (DRYFCVTKPLTYPVKRTTKM) are cytoplasmic. The chain crosses the membrane as a helical span at residues 143–165 (AGMMIAAAWVLSFILWAPAILFW). At 166 to 187 (QFIVGGRTVPDKDCYIQFFSNP) the chain is on the extracellular side. A helical membrane pass occupies residues 188-212 (AVTFGTAIAAFYLPVIIMTVLYWQI). Residues 213–387 (SRASKSRIKK…PPSREKKVTR (175 aa)) are Cytoplasmic-facing. 2 disordered regions span residues 223-265 (GKKE…KVQN) and 279-315 (QGEE…SASQ). Polar residues-rich tracts occupy residues 228–238 (AQNQDPVSPSL) and 246–256 (PNNNNIPTSSD). A compositionally biased stretch (low complexity) spans 287–298 (NDSTSVSVVPSN). A helical transmembrane segment spans residues 388-410 (TILAILLAFIITWTPYNVMVLIN). At 411–418 (SFCASCIP) the chain is on the extracellular side. A disulfide bridge links Cys413 with Cys416. The chain crosses the membrane as a helical span at residues 419–442 (GTVWTIGYWLCYINSTINPACYAL). Residues 436–440 (NPACY) carry the Important for signaling motif. Over 443–466 (CNATFKKTFKHLLMCHYKNIGATR) the chain is Cytoplasmic. Phosphothreonine occurs at positions 446, 450, and 465.

It belongs to the G-protein coupled receptor 1 family. Muscarinic acetylcholine receptor subfamily. CHRM2 sub-subfamily.

Its subcellular location is the cell membrane. It localises to the postsynaptic cell membrane. In terms of biological role, the muscarinic acetylcholine receptor mediates various cellular responses, including inhibition of adenylate cyclase, breakdown of phosphoinositides and modulation of potassium channels through the action of G proteins. Primary transducing effect is adenylate cyclase inhibition. Signaling promotes phospholipase C activity, leading to the release of inositol trisphosphate (IP3); this then triggers calcium ion release into the cytosol. The chain is Muscarinic acetylcholine receptor M2 (CHRM2) from Gallus gallus (Chicken).